We begin with the raw amino-acid sequence, 306 residues long: Secretory carrier-associated membrane protein 1 (306 aa).

The interval 1-66 (MAGRYDSNPF…LPPEPAAFGA (66 aa)) is disordered. Topologically, residues 1-141 (MAGRYDSNPF…EIPSHLQRMQ (141 aa)) are cytoplasmic. Positions 25 to 36 (KAGGQPSYGGGA) are enriched in gly residues. Over residues 40 to 55 (PNPRNVPSVSSNSRLS) the composition is skewed to low complexity. A coiled-coil region spans residues 72–109 (LDSSKDLKNREKELQAREAELNKREKELKRREEAAARA). The next 4 helical transmembrane spans lie at 142–162 (YVAF…VIAV), 174–194 (IWLL…VLWY), 209–229 (FGLF…SAVA), and 257–277 (IFYF…IWVI). At 278–306 (QQVYMYFRGSGKAAEMKRDATRGAMRAAF) the chain is on the cytoplasmic side.

It belongs to the SCAMP family.

The protein localises to the cell membrane. The protein resides in the cytoplasmic vesicle. Its subcellular location is the secretory vesicle membrane. In terms of biological role, probably involved in membrane trafficking. The polypeptide is Secretory carrier-associated membrane protein 1 (SCAMP1) (Oryza sativa subsp. japonica (Rice)).